A 153-amino-acid chain; its full sequence is Fimbrial protein EcpC (153 aa).

A propeptide spans 1–8 (leader sequence); that stretch reads MLKQVQKG. An N-methylphenylalanine modification is found at F9. A helical membrane pass occupies residues 9–29; the sequence is FTLIELMIVIAIIGILAAIAL. The cysteines at positions 130 and 143 are disulfide-linked.

It belongs to the N-Me-Phe pilin family.

It is found in the fimbrium. Its subcellular location is the membrane. The sequence is that of Fimbrial protein EcpC (ecpC) from Eikenella corrodens.